The sequence spans 51 residues: Large ribosomal subunit protein bL33 (51 aa).

The protein belongs to the bacterial ribosomal protein bL33 family.

The protein is Large ribosomal subunit protein bL33 of Marinobacter nauticus (strain ATCC 700491 / DSM 11845 / VT8) (Marinobacter aquaeolei).